Consider the following 471-residue polypeptide: Probable nucleoredoxin 3 (471 aa).

2 Thioredoxin domains span residues 15–173 (VSIP…ARRQ) and 179–334 (QLLG…KERD).

The protein belongs to the nucleoredoxin family.

The enzyme catalyses [protein]-dithiol + NAD(+) = [protein]-disulfide + NADH + H(+). The catalysed reaction is [protein]-dithiol + NADP(+) = [protein]-disulfide + NADPH + H(+). In terms of biological role, probable thiol-disulfide oxidoreductase that may participate in various redox reactions. The protein is Probable nucleoredoxin 3 of Oryza sativa subsp. japonica (Rice).